We begin with the raw amino-acid sequence, 372 residues long: Methylthioribose-1-phosphate isomerase 2 (372 aa).

Asp254 functions as the Proton donor in the catalytic mechanism.

Belongs to the eIF-2B alpha/beta/delta subunits family. MtnA subfamily.

It is found in the cytoplasm. The protein resides in the nucleus. The enzyme catalyses 5-(methylsulfanyl)-alpha-D-ribose 1-phosphate = 5-(methylsulfanyl)-D-ribulose 1-phosphate. The protein operates within amino-acid biosynthesis; L-methionine biosynthesis via salvage pathway; L-methionine from S-methyl-5-thio-alpha-D-ribose 1-phosphate: step 1/6. Functionally, catalyzes the interconversion of methylthioribose-1-phosphate (MTR-1-P) into methylthioribulose-1-phosphate (MTRu-1-P). The polypeptide is Methylthioribose-1-phosphate isomerase 2 (Trypanosoma cruzi (strain CL Brener)).